The sequence spans 82 residues: UPF0213 protein MW0443 (82 aa).

Residues 2–77 (DSHFVYIVKC…KTYTRQKKLR (76 aa)) enclose the GIY-YIG domain.

The protein belongs to the UPF0213 family.

The chain is UPF0213 protein MW0443 from Staphylococcus aureus (strain MW2).